Reading from the N-terminus, the 27-residue chain is Cupiennin-4b (27 aa).

Position 27 is a glutamine amide (Q27).

Expressed by the venom gland.

Its subcellular location is the secreted. The protein is Cupiennin-4b of Cupiennius salei (American wandering spider).